The following is a 393-amino-acid chain: Formate-dependent phosphoribosylglycinamide formyltransferase (393 aa).

N(1)-(5-phospho-beta-D-ribosyl)glycinamide is bound by residues 17–18 (EL) and E77. ATP-binding positions include R109, K150, 155–160 (SSGKGQ), 190–193 (EEFL), and E198. The ATP-grasp domain occupies 114–304 (DLAAGELGLR…EFELHLRAVL (191 aa)). Residues E263 and E275 each coordinate Mg(2+). Residues D282, K354, and 361-362 (RR) each bind N(1)-(5-phospho-beta-D-ribosyl)glycinamide.

It belongs to the PurK/PurT family. Homodimer.

It carries out the reaction N(1)-(5-phospho-beta-D-ribosyl)glycinamide + formate + ATP = N(2)-formyl-N(1)-(5-phospho-beta-D-ribosyl)glycinamide + ADP + phosphate + H(+). Its pathway is purine metabolism; IMP biosynthesis via de novo pathway; N(2)-formyl-N(1)-(5-phospho-D-ribosyl)glycinamide from N(1)-(5-phospho-D-ribosyl)glycinamide (formate route): step 1/1. In terms of biological role, involved in the de novo purine biosynthesis. Catalyzes the transfer of formate to 5-phospho-ribosyl-glycinamide (GAR), producing 5-phospho-ribosyl-N-formylglycinamide (FGAR). Formate is provided by PurU via hydrolysis of 10-formyl-tetrahydrofolate. The protein is Formate-dependent phosphoribosylglycinamide formyltransferase of Synechococcus sp. (strain RCC307).